Reading from the N-terminus, the 159-residue chain is Putative 2'-deoxynucleoside 5'-phosphate N-hydrolase 1 (159 aa).

Residues 25 to 31, Tyr40, His58, Glu104, and 126 to 128 each bind substrate; these read FLSGSIR and SAM.

The protein belongs to the 2'-deoxynucleoside 5'-phosphate N-hydrolase 1 family. In terms of assembly, monomer and homodimer.

It carries out the reaction a pyrimidine 2'-deoxyribonucleoside 5'-phosphate + H2O = a pyrimidine nucleobase + 2-deoxy-D-ribose 5-phosphate. The enzyme catalyses a purine 2'-deoxyribonucleoside 5'-phosphate + H2O = a purine nucleobase + 2-deoxy-D-ribose 5-phosphate. Its function is as follows. Catalyzes the cleavage of the N-glycosidic bond of deoxyribonucleoside 5'-monophosphates to yield deoxyribose 5-phosphate and a purine or pyrimidine base. This is Putative 2'-deoxynucleoside 5'-phosphate N-hydrolase 1 from Methanosarcina barkeri (strain Fusaro / DSM 804).